A 794-amino-acid chain; its full sequence is Protein sel-1 homolog 1 (794 aa).

Positions 1–21 are cleaved as a signal peptide; the sequence is MRVRIGLTLLLCAVLLSLASA. Residues 21–50 form a disordered region; it reads ASSDEEGSQDESLDSKTTLTSDESVKDHTT. Residues 22–737 are interaction with ERLEC1, OS9 and SYVN1; that stretch reads SSDEEGSQDE…DMFTQLDMDQ (716 aa). At 22–738 the chain is on the lumenal side; it reads SSDEEGSQDE…MFTQLDMDQL (717 aa). Positions 23–32 are enriched in acidic residues; the sequence is SDEEGSQDES. Position 63 is a phosphoserine (Ser63). The segment covering 64 to 77 has biased composition (acidic residues); sequence EESELESSIQEEED. Positions 64 to 109 are disordered; that stretch reads EESELESSIQEEEDSLKSQEGESVTEDISFLESPNPENKDYEEPKK. A Fibronectin type-II domain is found at 122–170; it reads AHGEPCHFPFLFLDKEYDECTSDGREDGRLWCATTYDYKADEKWGFCET. 2 cysteine pairs are disulfide-bonded: Cys127–Cys153 and Cys141–Cys168. 9 Sel1-like repeats span residues 183 to 218, 219 to 254, 255 to 290, 291 to 326, 373 to 409, 410 to 446, 447 to 482, 483 to 518, and 519 to 554; these read AEMM…SMNH, TKAL…EEGS, PKGQ…LGGN, LIAH…NHVA, VQAQ…NAGN, SHAM…DMGN, PVGQ…EQGW, VDGQ…QGGH, and ILAF…ERGR. N-linked (GlcNAc...) asparagine glycosylation is found at Asn195 and Asn217. Asn272 carries N-linked (GlcNAc...) asparagine glycosylation. Residues 352–537 form an important for homodimerization and oligomerization region; that stretch reads NSGMLEEDLI…MHASGTGVMR (186 aa). Residue Asn431 is glycosylated (N-linked (GlcNAc...) asparagine). Asn608 carries N-linked (GlcNAc...) asparagine glycosylation. Sel1-like repeat units lie at residues 627–662 and 664–699; these read TVAR…EQQH and AQAM…EASP. Residues 643-723 form an interaction with SYVN1 region; that stretch reads TDVDYETAFI…VVYFLQYIRE (81 aa). The interval 738-794 is mediates retention in the endoplasmic reticulum; it reads LLGPEWDLYLMTIIALLLGTVIAYRQRQHQDMPAPRPPGPRPAPPQQEGPPEQQPPQ. A helical transmembrane segment spans residues 739-759; that stretch reads LGPEWDLYLMTIIALLLGTVI. Residues 760–794 are Cytoplasmic-facing; the sequence is AYRQRQHQDMPAPRPPGPRPAPPQQEGPPEQQPPQ. Residues 766 to 794 form a disordered region; the sequence is HQDMPAPRPPGPRPAPPQQEGPPEQQPPQ. The span at 771-794 shows a compositional bias: pro residues; that stretch reads APRPPGPRPAPPQQEGPPEQQPPQ.

The protein belongs to the sel-1 family. Homodimer and homooligomer. May form a complex with ERLEC1, HSPA5, OS9, and SYVN1. Interacts with FOXRED2 and EDEM1. Interacts with LPL. Interacts with LMF1; may stabilize the complex formed by LPL and LMF1 and thereby promote the export of LPL dimers. Component of the HRD1 complex, which comprises at least SYNV1/HRD1, DERL1/2, FAM8A1, HERPUD1/HERP, OS9, SEL1L and UBE2J1. SYNV1 assembles with SEL1L and FAM8A1 through its transmembrane domains, but interaction with its cytoplasmic domain is required to confer stability to FAM8A1 and enhance recruitment of HERPUD1. The interaction with SYNV1/HRD1 is direct. In terms of assembly, (Microbial infection) Interacts with human cytomegalovirus protein UL148. N-glycosylated. In terms of tissue distribution, highly expressed in pancreas.

Its subcellular location is the endoplasmic reticulum membrane. Functionally, plays a role in the endoplasmic reticulum quality control (ERQC) system also called ER-associated degradation (ERAD) involved in ubiquitin-dependent degradation of misfolded endoplasmic reticulum proteins. Enhances SYVN1 stability. Plays a role in LPL maturation and secretion. Required for normal differentiation of the pancreas epithelium, and for normal exocrine function and survival of pancreatic cells. May play a role in Notch signaling. In Homo sapiens (Human), this protein is Protein sel-1 homolog 1.